The following is a 430-amino-acid chain: Adenylosuccinate synthetase (430 aa).

GTP-binding positions include Gly-12–Lys-18 and Gly-40–Thr-42. Asp-13 serves as the catalytic Proton acceptor. Positions 13 and 40 each coordinate Mg(2+). IMP-binding positions include Asp-13 to Lys-16, Asn-38 to His-41, Thr-128, Arg-142, Gln-223, Thr-238, and Arg-302. The Proton donor role is filled by His-41. Residue Thr-298–Arg-304 participates in substrate binding. Residues Arg-304, Ser-330–Asp-332, and Ser-412–Gly-414 each bind GTP.

The protein belongs to the adenylosuccinate synthetase family. In terms of assembly, homodimer. Mg(2+) is required as a cofactor.

The protein localises to the cytoplasm. The catalysed reaction is IMP + L-aspartate + GTP = N(6)-(1,2-dicarboxyethyl)-AMP + GDP + phosphate + 2 H(+). Its pathway is purine metabolism; AMP biosynthesis via de novo pathway; AMP from IMP: step 1/2. Its function is as follows. Plays an important role in the de novo pathway of purine nucleotide biosynthesis. Catalyzes the first committed step in the biosynthesis of AMP from IMP. The sequence is that of Adenylosuccinate synthetase from Streptococcus gordonii (strain Challis / ATCC 35105 / BCRC 15272 / CH1 / DL1 / V288).